The primary structure comprises 348 residues: Nicotinate-nucleotide pyrophosphorylase [carboxylating], chloroplastic (348 aa).

The N-terminal 41 residues, 1-41, are a transit peptide targeting the chloroplast; the sequence is MISVSRFLSPQFYAIPRSFVKMSASATQTAGEVSMGIKPPS. Residues Arg-139, 170 to 172, Arg-194, Lys-204, Glu-237, Asp-264, 296 to 298, and 317 to 319 contribute to the substrate site; these read TRK, SGN, and SGA.

Belongs to the NadC/ModD family.

It is found in the plastid. Its subcellular location is the chloroplast. It carries out the reaction nicotinate beta-D-ribonucleotide + CO2 + diphosphate = quinolinate + 5-phospho-alpha-D-ribose 1-diphosphate + 2 H(+). It functions in the pathway cofactor biosynthesis; NAD(+) biosynthesis; nicotinate D-ribonucleotide from quinolinate: step 1/1. Its function is as follows. Involved in the biosynthesis of NAD(+). Catalyzes the conversion of quinolate to nicotinate to nicotinate beta-D-ribonucleotide. The polypeptide is Nicotinate-nucleotide pyrophosphorylase [carboxylating], chloroplastic (Arabidopsis thaliana (Mouse-ear cress)).